The following is a 63-amino-acid chain: Synergistic-type venom protein C9S3, chain 2 (63 aa).

Cystine bridges form between cysteine 3–cysteine 24, cysteine 17–cysteine 42, and cysteine 46–cysteine 57.

This sequence belongs to the three-finger toxin family. Short-chain subfamily. Aminergic toxin sub-subfamily. In terms of assembly, heterodimer of C9S3 chain 1 (AC P01408) and chain 2, linked by at least two disulfide bonds. In terms of tissue distribution, expressed by the venom gland.

It localises to the secreted. In terms of biological role, this protein shows a synergetic toxic effect in that it enhances the toxicity of other D.angusticeps toxins. The protein is Synergistic-type venom protein C9S3, chain 2 of Dendroaspis angusticeps (Eastern green mamba).